A 771-amino-acid chain; its full sequence is PH and SEC7 domain-containing protein 2 (771 aa).

Disordered stretches follow at residues 1–67 (MEED…PDVA) and 107–136 (GDNASRSLYPDAEDPQLGLDGPGEPDVRDG). The segment covering 47–66 (GHERRGTPADTEEPTKDPDV) has biased composition (basic and acidic residues). Position 191 is a phosphoserine (Ser-191). Disordered stretches follow at residues 207–230 (GDMGAAGGDGELGSPLRRSISSSR) and 244–307 (PNGF…ANGC). Low complexity predominate over residues 218 to 230 (LGSPLRRSISSSR). Residues 257 to 266 (GDEDDDEEDT) are compositionally biased toward acidic residues. Residues 260–462 (DDDEEDTDKL…KTLYNSIKNE (203 aa)) enclose the SEC7 domain. Residues 288 to 299 (ELSSSEGLEPGS) show a composition bias toward low complexity. The 114-residue stretch at 512-625 (TTYKHGVLTR…WILRINLVAA (114 aa)) folds into the PH domain. Residues 622–639 (LVAAIFSAPAFPAAVSSM) traverse the membrane as a helical segment. A coiled-coil region spans residues 651–680 (TTRLCQEEQLRSHENKLRQLTAELAEHRCH). Residues 739–771 (DDPSLRKTHSSPALSQGHVTGSKTTKDATGPDT) are disordered. Positions 748 to 761 (SSPALSQGHVTGSK) are enriched in polar residues.

This sequence belongs to the PSD family.

It localises to the cell membrane. Its subcellular location is the cell projection. The protein resides in the ruffle membrane. The protein localises to the cleavage furrow. The protein is PH and SEC7 domain-containing protein 2 (PSD2) of Homo sapiens (Human).